A 693-amino-acid polypeptide reads, in one-letter code: Elongation factor G (693 aa).

Residues 8-282 (EKTRNIGIMA…AVIDYLPSPL (275 aa)) form the tr-type G domain. Residues 17–24 (AHVDAGKT), 81–85 (DTPGH), and 135–138 (NKMD) each bind GTP.

This sequence belongs to the TRAFAC class translation factor GTPase superfamily. Classic translation factor GTPase family. EF-G/EF-2 subfamily.

It localises to the cytoplasm. In terms of biological role, catalyzes the GTP-dependent ribosomal translocation step during translation elongation. During this step, the ribosome changes from the pre-translocational (PRE) to the post-translocational (POST) state as the newly formed A-site-bound peptidyl-tRNA and P-site-bound deacylated tRNA move to the P and E sites, respectively. Catalyzes the coordinated movement of the two tRNA molecules, the mRNA and conformational changes in the ribosome. The polypeptide is Elongation factor G (Streptococcus pneumoniae (strain P1031)).